A 700-amino-acid chain; its full sequence is Beta-galactosidase BgaB (700 aa).

R122 and N160 together coordinate substrate. E161 acts as the Proton donor in catalysis. Catalysis depends on E320, which acts as the Nucleophile. Substrate is bound by residues W328 and 368 to 371; that span reads EAFH.

It belongs to the glycosyl hydrolase 42 family. As to quaternary structure, trimer. Tetramer. In terms of processing, the N-terminus is blocked.

It carries out the reaction Hydrolysis of terminal non-reducing beta-D-galactose residues in beta-D-galactosides.. With respect to regulation, inhibited by high substrate concentrations (100 mg/ml). No effect on activity with various EDTA concentrations (0-1 mM). 20-fold higher activity when cells grown on TOS than when cells grown on galactose, glucose and lactose. In terms of biological role, involved in the hydrolysis of transgalactooligosaccharides (TOS). Highly active towards Gal(beta1-4)Gal and Gal(beta1-4)-Gal-containing oligosaccharides. Low activity towards Gal(beta1-3)Gal, lactose and Gal(beta1-3)GalOMe. No activity towards Gal(beta1-6)Gal, Gal(beta1-4)Man, Gal(alpha1-4)Gal, Gal(alpha1-3)Gal(beta1-4)Gal, lactulose, 3'fucosyllactose, lacto-N-fucopentaose I, lacto-N-fucopentaose II, cellobiose, maltose or sucrose. No transglycosylation activity is found at high substrate concentrations (100 mg/ml) and only low transglycosylation activity at lower substrate concentrations (10 mg/ml). The sequence is that of Beta-galactosidase BgaB (bgaB) from Bifidobacterium adolescentis (strain ATCC 15703 / DSM 20083 / NCTC 11814 / E194a).